Reading from the N-terminus, the 403-residue chain is MNIQSVRGFHDILGKDAKKFRKISDTARKILKLYNFEEIILPVVEYAELFQRSVGETTDIVQKEMFVFEDRKGRKLALRPEGTAGTVRAFIQHKLYALRPYVKLFYEGPMFRYERPQAGRYRQFHQIGAEVFGVAEPHADAEIIKIVYDILQALGIKGVVVEINSLGCKKDREAYREALLNYLTGVKEELCSDCISRMDRNPLRVLDCKVETCKVAVREAPKMIDFLCDECREHYEKLKNYLKALDIPFRENYNLVRGLDYYTRTVFEAVSDELGLTLIAGGRYDYLVEELGGPPTPALGFALGVERLMLLLPDEEEKEEVYFVIPFGDVHEYALRVADILRKKGKVVEYSYRKGGLKKQLEFADKLGVKYAVIIGEDEVKNQEVTIKDMETGEQRRVKLSEL.

Belongs to the class-II aminoacyl-tRNA synthetase family. In terms of assembly, homodimer.

It is found in the cytoplasm. The catalysed reaction is tRNA(His) + L-histidine + ATP = L-histidyl-tRNA(His) + AMP + diphosphate + H(+). This is Histidine--tRNA ligase (hisS) from Aquifex aeolicus (strain VF5).